Reading from the N-terminus, the 736-residue chain is Exo-oligoalginate lyase (736 aa).

Residues 1–23 form the signal peptide; it reads MLSVNTIKNTLLAAVLVSVPATA. Substrate contacts are provided by residues K136, 146 to 149, K198, H202, and 257 to 260; these read QSLN and YYQR. Y258 serves as the catalytic Proton donor. The Proton acceptor role is filled by H413. 2 residues coordinate Zn(2+): H415 and D433. Residue R438 coordinates substrate. A Zn(2+)-binding site is contributed by H464. A substrate-binding site is contributed by E667.

The protein belongs to the polysaccharide lyase 17 family. As to quaternary structure, homodimer. Requires Zn(2+) as cofactor.

It localises to the periplasm. The enzyme catalyses Cleavage of 4-deoxy-alpha-L-erythro-hex-4-enopyranuronoside oligosaccharides into 4-deoxy-alpha-L-erythro-hex-4-enopyranuronate monosaccharides.. Catalyzes the depolymerization of alginate through an exolytic mode of action, via a beta-elimination mechanism. Preferentially acts on oligoalginates with degrees of polymerization higher than 2 to produce the alginate monomer, 4-deoxy-L-erythro-5-hexoseulose uronic acid. The protein is Exo-oligoalginate lyase of Saccharophagus degradans (strain 2-40 / ATCC 43961 / DSM 17024).